The sequence spans 482 residues: Bifunctional protein GlmU (482 aa).

Residues 1-238 (MSATSPAAVV…HREILGINNR (238 aa)) are pyrophosphorylase. UDP-N-acetyl-alpha-D-glucosamine-binding positions include 12 to 15 (LAAG), Lys26, Gln79, and 84 to 85 (GT). Asp110 is a binding site for Mg(2+). UDP-N-acetyl-alpha-D-glucosamine is bound by residues Gly147, Glu163, Asn178, and Asn236. Asn236 contacts Mg(2+). Positions 239 to 259 (LQLAEARRLLNERLLERAMLA) are linker. Residues 260–482 (GVTVVDPAST…ASSQETDGQS (223 aa)) form an N-acetyltransferase region. Positions 341 and 359 each coordinate UDP-N-acetyl-alpha-D-glucosamine. Residue His371 is the Proton acceptor of the active site. Tyr374 and Asn385 together coordinate UDP-N-acetyl-alpha-D-glucosamine. Acetyl-CoA-binding positions include Ala388, 394-395 (NY), Ser413, Ala431, and Arg448. The disordered stretch occupies residues 458-482 (VARKRPGSAAAQAAQASSQETDGQS). Residues 465 to 476 (SAAAQAAQASSQ) are compositionally biased toward low complexity.

The protein in the N-terminal section; belongs to the N-acetylglucosamine-1-phosphate uridyltransferase family. In the C-terminal section; belongs to the transferase hexapeptide repeat family. Homotrimer. Requires Mg(2+) as cofactor.

Its subcellular location is the cytoplasm. It catalyses the reaction alpha-D-glucosamine 1-phosphate + acetyl-CoA = N-acetyl-alpha-D-glucosamine 1-phosphate + CoA + H(+). The enzyme catalyses N-acetyl-alpha-D-glucosamine 1-phosphate + UTP + H(+) = UDP-N-acetyl-alpha-D-glucosamine + diphosphate. Its pathway is nucleotide-sugar biosynthesis; UDP-N-acetyl-alpha-D-glucosamine biosynthesis; N-acetyl-alpha-D-glucosamine 1-phosphate from alpha-D-glucosamine 6-phosphate (route II): step 2/2. It participates in nucleotide-sugar biosynthesis; UDP-N-acetyl-alpha-D-glucosamine biosynthesis; UDP-N-acetyl-alpha-D-glucosamine from N-acetyl-alpha-D-glucosamine 1-phosphate: step 1/1. The protein operates within bacterial outer membrane biogenesis; LPS lipid A biosynthesis. Catalyzes the last two sequential reactions in the de novo biosynthetic pathway for UDP-N-acetylglucosamine (UDP-GlcNAc). The C-terminal domain catalyzes the transfer of acetyl group from acetyl coenzyme A to glucosamine-1-phosphate (GlcN-1-P) to produce N-acetylglucosamine-1-phosphate (GlcNAc-1-P), which is converted into UDP-GlcNAc by the transfer of uridine 5-monophosphate (from uridine 5-triphosphate), a reaction catalyzed by the N-terminal domain. The polypeptide is Bifunctional protein GlmU (Streptomyces griseus subsp. griseus (strain JCM 4626 / CBS 651.72 / NBRC 13350 / KCC S-0626 / ISP 5235)).